Reading from the N-terminus, the 187-residue chain is Transcriptional regulator VspR (187 aa).

Functionally, represses the transcription of several genes encoded within the Vibrio 7th pandemic island-1 (VSP-1), including dncV, VC_0176, VC_0178 and VC_0180. This chain is Transcriptional regulator VspR (vspR), found in Vibrio cholerae serotype O1 (strain ATCC 39315 / El Tor Inaba N16961).